The chain runs to 353 residues: 11-beta-hydroxysteroid dehydrogenase B (353 aa).

Residues L10–P30 traverse the membrane as a helical; Signal-anchor for type II membrane protein segment. Positions P13–A26 match the Proline-knob motif. Residues G54–R80 and D105 contribute to the NADP(+) site. Position 184 (S184) interacts with substrate. Y197 acts as the Proton acceptor in catalysis. NADP(+)-binding positions include Y197–K201 and K201.

This sequence belongs to the short-chain dehydrogenases/reductases (SDR) family. In terms of tissue distribution, expressed in seeds (at protein level).

It is found in the lipid droplet. It localises to the membrane. It catalyses the reaction an 11beta-hydroxysteroid + NADP(+) = an 11-oxosteroid + NADPH + H(+). Its function is as follows. Has dehydrogenase activity against 11 beta-hydroxysteroid and 17 beta-hydroxysteroid. May be involved in signal transduction regulated by various sterols. In Arachis hypogaea (Peanut), this protein is 11-beta-hydroxysteroid dehydrogenase B.